Here is a 241-residue protein sequence, read N- to C-terminus: Triosephosphate isomerase (241 aa).

Residue 9-11 (NWK) coordinates substrate. His96 functions as the Electrophile in the catalytic mechanism. Glu165 acts as the Proton acceptor in catalysis. Residues Gly171, Ser204, and 225 to 226 (GG) contribute to the substrate site.

It belongs to the triosephosphate isomerase family. In terms of assembly, homodimer.

Its subcellular location is the cytoplasm. The enzyme catalyses D-glyceraldehyde 3-phosphate = dihydroxyacetone phosphate. It functions in the pathway carbohydrate biosynthesis; gluconeogenesis. It participates in carbohydrate degradation; glycolysis; D-glyceraldehyde 3-phosphate from glycerone phosphate: step 1/1. Its function is as follows. Involved in the gluconeogenesis. Catalyzes stereospecifically the conversion of dihydroxyacetone phosphate (DHAP) to D-glyceraldehyde-3-phosphate (G3P). This Prochlorococcus marinus (strain MIT 9515) protein is Triosephosphate isomerase.